Reading from the N-terminus, the 458-residue chain is V-type ATP synthase beta chain (458 aa).

Belongs to the ATPase alpha/beta chains family.

Its function is as follows. Produces ATP from ADP in the presence of a proton gradient across the membrane. The V-type beta chain is a regulatory subunit. This is V-type ATP synthase beta chain from Enterococcus faecalis (strain ATCC 700802 / V583).